A 202-amino-acid polypeptide reads, in one-letter code: Endothelin-1 (202 aa).

The signal sequence occupies residues 1–25; sequence MDYLPVLFSLLLVVFQGAPEAAVLG. Residues 26–50 constitute a propeptide that is removed on maturation; it reads AELSTGPDSGGEKPAPSAPWRPRRS. Residues 28-48 form a disordered region; it reads LSTGPDSGGEKPAPSAPWRPR. Disulfide bonds link C53/C67 and C55/C63. Residues 74–202 constitute a propeptide that is removed on maturation; it reads VNTPEHIVPY…EKKVTHNRTH (129 aa). The endothelin-like stretch occupies residues 110–124; the sequence is CQCASQKDKKCWTFC.

The protein belongs to the endothelin/sarafotoxin family.

It is found in the secreted. Its function is as follows. Endothelins are endothelium-derived vasoconstrictor peptides. Probable ligand for G-protein coupled receptors EDNRA and EDNRB which activates PTK2B, BCAR1, BCAR3 and, GTPases RAP1 and RHOA cascade in glomerular mesangial cells. Also binds the DEAR/FBXW7-AS1 receptor. Promotes mesenteric arterial wall remodeling via activation of ROCK signaling and subsequent colocalization of NFATC3 with F-actin filaments. NFATC3 then translocates to the nucleus where it subsequently promotes the transcription of the smooth muscle hypertrophy and differentiation marker ACTA2. The protein is Endothelin-1 (EDN1) of Felis catus (Cat).